The chain runs to 288 residues: uncharacterized protein (288 aa).

Residues 6-20 (GFIGLGVMGKSMASH) and Thr97 each bind NAD(+). Lys172 is an active-site residue. Residue Lys240 participates in NAD(+) binding.

Belongs to the HIBADH-related family.

It is found in the cell membrane. The protein resides in the membrane raft. This is an uncharacterized protein from Bacillus subtilis (strain 168).